Here is a 324-residue protein sequence, read N- to C-terminus: UDP-N-acetylenolpyruvoylglucosamine reductase (324 aa).

An FAD-binding PCMH-type domain is found at 36–203; sequence FRAGGLAELM…THAIFEGYAE (168 aa). The active site involves R183. The active-site Proton donor is S232. E302 is an active-site residue.

Belongs to the MurB family. It depends on FAD as a cofactor.

The protein resides in the cytoplasm. It catalyses the reaction UDP-N-acetyl-alpha-D-muramate + NADP(+) = UDP-N-acetyl-3-O-(1-carboxyvinyl)-alpha-D-glucosamine + NADPH + H(+). It participates in cell wall biogenesis; peptidoglycan biosynthesis. Cell wall formation. The protein is UDP-N-acetylenolpyruvoylglucosamine reductase of Rhizobium meliloti (strain 1021) (Ensifer meliloti).